A 204-amino-acid chain; its full sequence is Small ribosomal subunit protein uS4 (204 aa).

Residues 25-45 form a disordered region; sequence AVPSRRAYPPGQHGQARKKRS. An S4 RNA-binding domain is found at 92-152; sequence MRLDNIIFRL…NKENSRRLAE (61 aa).

This sequence belongs to the universal ribosomal protein uS4 family. As to quaternary structure, part of the 30S ribosomal subunit. Contacts protein S5. The interaction surface between S4 and S5 is involved in control of translational fidelity.

Its function is as follows. One of the primary rRNA binding proteins, it binds directly to 16S rRNA where it nucleates assembly of the body of the 30S subunit. Functionally, with S5 and S12 plays an important role in translational accuracy. The polypeptide is Small ribosomal subunit protein uS4 (Cyanothece sp. (strain PCC 7425 / ATCC 29141)).